We begin with the raw amino-acid sequence, 822 residues long: Tyrosine-protein kinase Fer (822 aa).

One can recognise an F-BAR domain in the interval 1–259; that stretch reads MGFGSDLKNS…SVEQIDPSTE (259 aa). The interval 1–300 is important for interaction with membranes containing phosphoinositides; it reads MGFGSDLKNS…QANEIMWNNL (300 aa). 2 coiled-coil regions span residues 123-185 and 301-390; these read AEMI…HNQY and TAES…KVQE. Position 402 is a phosphotyrosine (Tyr-402). At Ser-434 the chain carries Phosphoserine. Residues 460–550 form the SH2 domain; the sequence is WYHGAIPRIE…KSGVVLLNPI (91 aa). One can recognise a Protein kinase domain in the interval 563-816; it reads VILGELLGKG…FSELQKELTI (254 aa). ATP is bound by residues 569–577 and Lys-591; that span reads LGKGNFGEV. Tyr-615 carries the post-translational modification Phosphotyrosine; by autocatalysis. The active-site Proton acceptor is the Asp-684. Tyr-714 carries the post-translational modification Phosphotyrosine; by autocatalysis.

This sequence belongs to the protein kinase superfamily. Tyr protein kinase family. Fes/fps subfamily. As to quaternary structure, homotrimer. Interacts with ARHGDIA, IRS1, JAK1, NRP1, PIK3R1, PLEC and TMF1. Interacts with PPP1CA and regulates its phosphorylation at 'Thr-320'. Interacts with CTNND1, EGFR, FLT3, PECAM1, PDGFR and STAT3. Interacts (via SH2 domain) with CTTN. Interacts with HSP90; this stabilizes phosphorylated FER and protects FER against proteasomal degradation. Component of a complex that contains at least FER, CTTN and PTK2/FAK1. Autophosphorylated. In terms of processing, polyubiquitinated; this leads to proteasomal degradation. Isoform 1 is detected in normal colon and in fibroblasts (at protein level). Isoform 3 is detected in normal testis, in colon carcinoma-derived metastases in lung, liver and ovary, and in colon carcinoma and hepato carcinoma cell lines (at protein level). Isoform 3 is not detected in normal colon or in normal fibroblasts (at protein level). Widely expressed.

It localises to the cytoplasm. The protein resides in the cytoskeleton. The protein localises to the cell membrane. Its subcellular location is the cell projection. It is found in the cell junction. It localises to the membrane. The protein resides in the nucleus. The protein localises to the cell cortex. It catalyses the reaction L-tyrosyl-[protein] + ATP = O-phospho-L-tyrosyl-[protein] + ADP + H(+). Its activity is regulated as follows. Activated by phosphatidic acid binding. Activated by hydrogen peroxide (in vitro). Activated by reactive oxygen species (ROS). Functionally, tyrosine-protein kinase that acts downstream of cell surface receptors for growth factors and plays a role in the regulation of the actin cytoskeleton, microtubule assembly, lamellipodia formation, cell adhesion, cell migration and chemotaxis. Acts downstream of EGFR, KIT, PDGFRA and PDGFRB. Acts downstream of EGFR to promote activation of NF-kappa-B and cell proliferation. May play a role in the regulation of the mitotic cell cycle. Plays a role in the insulin receptor signaling pathway and in activation of phosphatidylinositol 3-kinase. Acts downstream of the activated FCER1 receptor and plays a role in FCER1 (high affinity immunoglobulin epsilon receptor)-mediated signaling in mast cells. Plays a role in the regulation of mast cell degranulation. Plays a role in leukocyte recruitment and diapedesis in response to bacterial lipopolysaccharide (LPS). Plays a role in synapse organization, trafficking of synaptic vesicles, the generation of excitatory postsynaptic currents and neuron-neuron synaptic transmission. Plays a role in neuronal cell death after brain damage. Phosphorylates CTTN, CTNND1, PTK2/FAK1, GAB1, PECAM1 and PTPN11. May phosphorylate JUP and PTPN1. Can phosphorylate STAT3, but the biological relevance of this depends on cell type and stimulus. The polypeptide is Tyrosine-protein kinase Fer (FER) (Homo sapiens (Human)).